The sequence spans 510 residues: Lysine--tRNA ligase (510 aa).

Mg(2+) is bound by residues Glu-420 and Glu-427.

Belongs to the class-II aminoacyl-tRNA synthetase family. In terms of assembly, homodimer. It depends on Mg(2+) as a cofactor.

Its subcellular location is the cytoplasm. The enzyme catalyses tRNA(Lys) + L-lysine + ATP = L-lysyl-tRNA(Lys) + AMP + diphosphate. The protein is Lysine--tRNA ligase of Vibrio vulnificus (strain CMCP6).